A 326-amino-acid chain; its full sequence is UDP-N-acetylglucosamine transporter (326 aa).

The next 8 membrane-spanning stretches (helical) occupy residues 4 to 24 (NLKY…VLTM), 38 to 58 (LSST…ILLV), 136 to 156 (LGVY…FVQW), 174 to 194 (FVGL…GVYF), 212 to 232 (LGFF…GELV), 244 to 264 (LTWI…AVIK), 269 to 289 (ILKG…SYFW), and 293 to 313 (FVPT…TFLY).

Belongs to the nucleotide-sugar transporter family. SLC35A subfamily. Interacts with SLC35A2; the interaction is reduced in the presence of SLC35A4. Found in a complex with SLC35A2 and SLC35A4. Interacts with MGAT4B. Post-translationally, O-Glcnacylation regulates the stability of SLC35A3 and the specific complex formation with MGAT4B.

The protein localises to the golgi apparatus membrane. It catalyses the reaction UMP(out) + UDP-N-acetyl-alpha-D-glucosamine(in) = UMP(in) + UDP-N-acetyl-alpha-D-glucosamine(out). In terms of biological role, transports diphosphate-N-acetylglucosamine (UDP-GlcNAc) from the cytosol into the lumen of the Golgi apparatus, functioning as an antiporter that exchanges UDP-N-acetyl-alpha-D-glucosamine for UMP. May supply UDP-GlcNAc as substrate for Golgi-resident glycosyltransferases that generate highly branched, multiantennary complex N-glycans and keratan sulfate. However, the exact role of SLC35A3 still needs to be elucidated, it could be a member of a catalytically more efficient multiprotein complex rather than function independently as a single transporter. The chain is UDP-N-acetylglucosamine transporter (SLC35A3) from Bos taurus (Bovine).